A 613-amino-acid chain; its full sequence is Laccase 1 (613 aa).

An N-terminal signal peptide occupies residues Met1–Ala20. Plastocyanin-like domains are found at residues Ile29–Lys142, Tyr171–Pro359, and Asp468–Gly598. N-linked (GlcNAc...) asparagine glycosylation is present at Asn74. Cu cation contacts are provided by His78, His80, His122, and His124. Asn256, Asn279, and Asn484 each carry an N-linked (GlcNAc...) asparagine glycan. The Cu cation site is built by His506, His509, and His511. An N-linked (GlcNAc...) asparagine glycan is attached at Asn526. Residues His580, Cys581, His582, and His586 each coordinate Cu cation.

The protein belongs to the multicopper oxidase family. Cu cation serves as cofactor.

It localises to the cell surface. It functions in the pathway pigment biosynthesis. Laccase; part of the Pks1 gene cluster that mediates the biosynthesis of an anthraquinone derivative pigment that contributes to conidial pigmentation that provides protection from UV radiation, heat and cold stress. The polyketide synthase Pks1 produces 1-acetyl-2,4,6,8-tetrahydroxy-9,10-anthraquinone though condensation of acetyl-CoA with malonyl-CoA. The dehydratase EthD and the laccase Mlac1 further convert the anthraquinone derivative into the final conidial pigment. In Metarhizium acridum (strain CQMa 102), this protein is Laccase 1.